We begin with the raw amino-acid sequence, 243 residues long: Carboxy-S-adenosyl-L-methionine synthase (243 aa).

S-adenosyl-L-methionine contacts are provided by residues Tyr-40, 65 to 67 (GCS), 90 to 91 (DN), 118 to 119 (DI), Asn-133, and Arg-200.

This sequence belongs to the class I-like SAM-binding methyltransferase superfamily. Cx-SAM synthase family. As to quaternary structure, homodimer.

It catalyses the reaction prephenate + S-adenosyl-L-methionine = carboxy-S-adenosyl-L-methionine + 3-phenylpyruvate + H2O. In terms of biological role, catalyzes the conversion of S-adenosyl-L-methionine (SAM) to carboxy-S-adenosyl-L-methionine (Cx-SAM). The sequence is that of Carboxy-S-adenosyl-L-methionine synthase from Shewanella loihica (strain ATCC BAA-1088 / PV-4).